Consider the following 440-residue polypeptide: Long-chain alkane monooxygenase (440 aa).

FMN is bound by residues Asp58, 137-138 (SH), Tyr158, and 227-230 (AGMS).

It belongs to the NtaA/SnaA/DszA monooxygenase family. In terms of assembly, homodimer.

It is found in the secreted. The enzyme catalyses a long-chain alkane + FMNH2 + O2 = a long chain fatty alcohol + FMN + H2O + H(+). Its function is as follows. Involved in the degradation of long-chain alkanes. Converts alkanes ranging from C(15) to C(36) into their corresponding primary alcohols. This chain is Long-chain alkane monooxygenase, found in Geobacillus thermodenitrificans (strain NG80-2).